The following is a 381-amino-acid chain: Creatine kinase B-type (381 aa).

A Phosphoserine modification is found at serine 4. The 88-residue stretch at 11 to 98 (KLRFPAEDEF…FDPIIEDRHG (88 aa)) folds into the Phosphagen kinase N-terminal domain. Threonine 35 carries the post-translational modification Phosphothreonine. A Glycyl lysine isopeptide (Lys-Gly) (interchain with G-Cter in ubiquitin) cross-link involves residue lysine 45. Valine 72 serves as a coordination point for creatine. Residues 96 to 110 (RHGGYKPSDEHKTDL) are compositionally biased toward basic and acidic residues. The disordered stretch occupies residues 96–122 (RHGGYKPSDEHKTDLNPDNLQGGDDLD). Glycyl lysine isopeptide (Lys-Gly) (interchain with G-Cter in ubiquitin) cross-links involve residues lysine 101 and lysine 107. Tyrosine 125 carries the phosphotyrosine modification. The region spanning 125 to 367 (YVLSSRVRTG…KLLIEMEQRL (243 aa)) is the Phosphagen kinase C-terminal domain. Residues 128-132 (SSRVR), arginine 130, arginine 132, and histidine 191 contribute to the ATP site. Residues 130–138 (RVRTGRSIR) are internal MTS-like signal. Serine 199 is modified (phosphoserine). A creatine-binding site is contributed by glutamate 232. Arginine 236 is an ATP binding site. 3'-nitrotyrosine is present on tyrosine 269. Serine 285 contributes to the creatine binding site. Arginine 292 contacts ATP. Phosphoserine is present on serine 309. Residues arginine 320, 320-325 (RGTGGV), and aspartate 335 contribute to the ATP site. Threonine 322 carries the post-translational modification Phosphothreonine. A Glycyl lysine isopeptide (Lys-Gly) (interchain with G-Cter in ubiquitin) cross-link involves residue lysine 381.

The protein belongs to the ATP:guanido phosphotransferase family. In terms of assembly, dimer of identical or non-identical chains, which can be either B (brain type) or M (muscle type). With MM being the major form in skeletal muscle and myocardium, MB existing in myocardium, and BB existing in many tissues, especially brain. Interacts with SLC12A6 (via C-terminus); the interaction may be required for SLC12A6 potassium-chloride cotransport activity. In terms of processing, ubiquitinated by the ECS(ASB9) complex, leading to its degradation by the proteasome.

Its subcellular location is the cytoplasm. It is found in the cytosol. It localises to the mitochondrion. The protein resides in the cell membrane. It carries out the reaction creatine + ATP = N-phosphocreatine + ADP + H(+). Functionally, reversibly catalyzes the transfer of phosphate between ATP and various phosphogens (e.g. creatine phosphate). Creatine kinase isoenzymes play a central role in energy transduction in tissues with large, fluctuating energy demands, such as skeletal muscle, heart, brain and spermatozoa. Acts as a key regulator of adaptive thermogenesis as part of the futile creatine cycle: localizes to the mitochondria of thermogenic fat cells and acts by mediating phosphorylation of creatine to initiate a futile cycle of creatine phosphorylation and dephosphorylation. During the futile creatine cycle, creatine and N-phosphocreatine are in a futile cycle, which dissipates the high energy charge of N-phosphocreatine as heat without performing any mechanical or chemical work. The protein is Creatine kinase B-type of Homo sapiens (Human).